The chain runs to 439 residues: MKLAVQHFSHSSEIDIRVWESLENRIFYHQANFSDAEGYSVLKAYLEQLDQQYGTQGNRLFYLSTPPDYFQEIIRNLNRHQLFYHEQGAQQPWSRLIIEKPFGVNLETARELQQCIDANIDEESVYRIDHYLGKETVQNILTIRFANTLFESCWNSQYIDHVQISVSESIGIGSRGNFFEKSGMLRDMVQNHLTQLLCLLTMEPPSEFFSEEIKKEKIKILKKILPIREEDAVRGQYGEGIVQDVSVLGYREEENVDPNSSVETYVALKLFIDNPRWKGVPFYLQAGKRLPKRTTDIAVIFKKSSYNLFNAENCPLCPLENDLLIIRIQPDEGVALQFNCKVPGTNKLVRPVKMDFRYDSYFNTVTPEAYERLLCDCILGDRTLFTSNEEVLASWELFSPLLEKWSQVRPIFPNYMAGSLRPQEADELLSRDGKAWRPY.

Lys100 is a binding site for NADP(+). Substrate-binding residues include His130, Lys134, Glu168, and Asp187. Residue His192 is the Proton acceptor of the active site. Lys288 contacts substrate.

Belongs to the glucose-6-phosphate dehydrogenase family.

It catalyses the reaction D-glucose 6-phosphate + NADP(+) = 6-phospho-D-glucono-1,5-lactone + NADPH + H(+). It functions in the pathway carbohydrate degradation; pentose phosphate pathway; D-ribulose 5-phosphate from D-glucose 6-phosphate (oxidative stage): step 1/3. Functionally, catalyzes the oxidation of glucose 6-phosphate to 6-phosphogluconolactone. In Chlamydia trachomatis serovar D (strain ATCC VR-885 / DSM 19411 / UW-3/Cx), this protein is Glucose-6-phosphate 1-dehydrogenase.